The sequence spans 427 residues: Histidinol dehydrogenase (427 aa).

NAD(+) contacts are provided by Tyr125, Gln186, and Asn209. Substrate-binding residues include Ser234, Gln256, and His259. 2 residues coordinate Zn(2+): Gln256 and His259. Residues Glu325 and His326 each act as proton acceptor in the active site. Positions 326, 359, 413, and 419 each coordinate substrate. Asp359 serves as a coordination point for Zn(2+). His419 lines the Zn(2+) pocket.

It belongs to the histidinol dehydrogenase family. Requires Zn(2+) as cofactor.

The enzyme catalyses L-histidinol + 2 NAD(+) + H2O = L-histidine + 2 NADH + 3 H(+). The protein operates within amino-acid biosynthesis; L-histidine biosynthesis; L-histidine from 5-phospho-alpha-D-ribose 1-diphosphate: step 9/9. In terms of biological role, catalyzes the sequential NAD-dependent oxidations of L-histidinol to L-histidinaldehyde and then to L-histidine. In Leptospira interrogans serogroup Icterohaemorrhagiae serovar copenhageni (strain Fiocruz L1-130), this protein is Histidinol dehydrogenase.